Here is a 247-residue protein sequence, read N- to C-terminus: MADS-box protein defh21 (247 aa).

An MADS-box domain is found at 1–61 (MGRGKIEVKR…GKLTEYCTPP (61 aa)). The K-box domain maps to 91-183 (NDQVIKELTR…WLMSNQIQRQ (93 aa)).

In terms of tissue distribution, expressed exclusively in a few inner cell layers of the inner integuments of the ovules.

It localises to the nucleus. In terms of biological role, probable transcription factor. This is MADS-box protein defh21 (DEFH21) from Antirrhinum majus (Garden snapdragon).